A 133-amino-acid chain; its full sequence is Snaclec botrocetin subunit alpha (133 aa).

Cystine bridges form between cysteine 2–cysteine 13, cysteine 30–cysteine 128, and cysteine 103–cysteine 120. The 121-residue stretch at 9-129 (YEGNCYKFFQ…CAQKNPFVCK (121 aa)) folds into the C-type lectin domain.

This sequence belongs to the snaclec family. As to quaternary structure, heterodimer of subunits alpha and beta; disulfide-linked. Botrocetin and vWF form a soluble complex. As to expression, expressed by the venom gland.

The protein localises to the secreted. Functionally, snaclec that binds to von Willebrand factor (VWF) and induces its interaction with GPIbalpha (GP1BA) (via the vWF A1 domain), resulting in platelet aggregation. The polypeptide is Snaclec botrocetin subunit alpha (Bothrops jararaca (Jararaca)).